The sequence spans 480 residues: MTVETFNPKQTTTLETPAKTLEAASADLANAESATGNRIGFVSLGCPKNLVDSERILTQLRIDGYEVTNSYDNADLVIVNTCGFIDAAVEESLDAVREALEENGKVIVTGCLGAKENQIREVHPDVLEITGPHSYEAVLKHVHKYVPKPEHNPFTSLIPQTGVKLTPKHYAYLKISEGCDNRCTFCIIPALRGDLDSRPAGSVLDEAKRLVESGVQEILVVSQDTSAYGKDKGGRTDFWNGMPVKQDITSLARQLGKMGAWVRLHYIYPYPWVDDLIPLMAEGLILPYLDIPMQHASPRILKMMKRPGRVDRQLEAIQRWREICPDLVIRSTFIVGFPGETEEDFEMLLDFLREARLDRVGCFKYSEVEGAVANTIAELISEDVKEDRYHRFMEVQAEISAERLARFVGRTMDILIDDVDEEGAIGRSFADAPEIDGMVFINGETELEPGMLVRAVITHSDEHDLWAELVDADAEDDIEA.

Positions 37–147 (NRIGFVSLGC…VLKHVHKYVP (111 aa)) constitute an MTTase N-terminal domain. 6 residues coordinate [4Fe-4S] cluster: Cys-46, Cys-82, Cys-111, Cys-179, Cys-183, and Cys-186. The Radical SAM core domain occupies 165–402 (LTPKHYAYLK…MEVQAEISAE (238 aa)). The 67-residue stretch at 405–471 (ARFVGRTMDI…EHDLWAELVD (67 aa)) folds into the TRAM domain.

Belongs to the methylthiotransferase family. RimO subfamily. [4Fe-4S] cluster serves as cofactor.

The protein resides in the cytoplasm. The catalysed reaction is L-aspartate(89)-[ribosomal protein uS12]-hydrogen + (sulfur carrier)-SH + AH2 + 2 S-adenosyl-L-methionine = 3-methylsulfanyl-L-aspartate(89)-[ribosomal protein uS12]-hydrogen + (sulfur carrier)-H + 5'-deoxyadenosine + L-methionine + A + S-adenosyl-L-homocysteine + 2 H(+). Its function is as follows. Catalyzes the methylthiolation of an aspartic acid residue of ribosomal protein uS12. The protein is Ribosomal protein uS12 methylthiotransferase RimO of Shewanella sp. (strain ANA-3).